We begin with the raw amino-acid sequence, 355 residues long: Protein pelota homolog (355 aa).

The protein belongs to the eukaryotic release factor 1 family. Pelota subfamily. Monomer. Requires a divalent metal cation as cofactor.

Its subcellular location is the cytoplasm. May function in recognizing stalled ribosomes, interact with stem-loop structures in stalled mRNA molecules, and effect endonucleolytic cleavage of the mRNA. May play a role in the release non-functional ribosomes and degradation of damaged mRNAs. Has endoribonuclease activity. The chain is Protein pelota homolog from Natronomonas pharaonis (strain ATCC 35678 / DSM 2160 / CIP 103997 / JCM 8858 / NBRC 14720 / NCIMB 2260 / Gabara) (Halobacterium pharaonis).